Consider the following 383-residue polypeptide: Chaperone protein DnaJ (383 aa).

Positions 6–71 (DYYEVLGVSK…QKRSQYDQFG (66 aa)) constitute a J domain. The segment at 141–223 (GVEKKVKVKK…CKGEGVEIGE (83 aa)) adopts a CR-type zinc-finger fold. Zn(2+)-binding residues include cysteine 154, cysteine 157, cysteine 171, cysteine 174, cysteine 197, cysteine 200, cysteine 211, and cysteine 214. CXXCXGXG motif repeat units follow at residues 154 to 161 (CSKCRGDG), 171 to 178 (CQTCHGTG), 197 to 204 (CPTCHGEG), and 211 to 218 (CSKCKGEG).

It belongs to the DnaJ family. In terms of assembly, homodimer. Zn(2+) serves as cofactor.

It is found in the cytoplasm. Functionally, participates actively in the response to hyperosmotic and heat shock by preventing the aggregation of stress-denatured proteins and by disaggregating proteins, also in an autonomous, DnaK-independent fashion. Unfolded proteins bind initially to DnaJ; upon interaction with the DnaJ-bound protein, DnaK hydrolyzes its bound ATP, resulting in the formation of a stable complex. GrpE releases ADP from DnaK; ATP binding to DnaK triggers the release of the substrate protein, thus completing the reaction cycle. Several rounds of ATP-dependent interactions between DnaJ, DnaK and GrpE are required for fully efficient folding. Also involved, together with DnaK and GrpE, in the DNA replication of plasmids through activation of initiation proteins. The polypeptide is Chaperone protein DnaJ (Porphyromonas gingivalis (strain ATCC BAA-308 / W83)).